A 505-amino-acid chain; its full sequence is Aspartyl/glutamyl-tRNA(Asn/Gln) amidotransferase subunit B (505 aa).

Belongs to the GatB/GatE family. GatB subfamily. In terms of assembly, heterotrimer of A, B and C subunits.

The enzyme catalyses L-glutamyl-tRNA(Gln) + L-glutamine + ATP + H2O = L-glutaminyl-tRNA(Gln) + L-glutamate + ADP + phosphate + H(+). The catalysed reaction is L-aspartyl-tRNA(Asn) + L-glutamine + ATP + H2O = L-asparaginyl-tRNA(Asn) + L-glutamate + ADP + phosphate + 2 H(+). Functionally, allows the formation of correctly charged Asn-tRNA(Asn) or Gln-tRNA(Gln) through the transamidation of misacylated Asp-tRNA(Asn) or Glu-tRNA(Gln) in organisms which lack either or both of asparaginyl-tRNA or glutaminyl-tRNA synthetases. The reaction takes place in the presence of glutamine and ATP through an activated phospho-Asp-tRNA(Asn) or phospho-Glu-tRNA(Gln). The protein is Aspartyl/glutamyl-tRNA(Asn/Gln) amidotransferase subunit B of Corynebacterium jeikeium (strain K411).